The primary structure comprises 2161 residues: MSGDNRRRDRKDTRWSKKPKVVNTAEDELESKLGFGLFSEGETRLGWLLTFSSSSWEDRDTGKVYSCVDLYFVTQDGFSFKTKYKFRPYFYAATKDKMELELEAYLRRRYERQVADIEIVEKEDLDLKNHLSGLQKKYLKISFDTVQQLMEVKRDLLHIVERNQAKFDALEAYESILAGKREQRPQDCLDSIVDLREYDVPYHVRFAIDNDVRSGQWYNVSISSTDVILEKRTDLLQRAEVRVCAFDIETTKLPLKFPDAEYDQIMMISYMVDGQGFLIINRECVGEDVEDLEYTPKPEFEGYFKVTNVKNEVELLQRWFYHMQELKPGIYVTYNGDFFDWPFIERRASHHGIKMNEELGFRCDQNQGECRAKFACHLDCFAWVKRDSYLPQGSHGLKAVTKAKLGYDPLEVNPEDMVRFAMEKPQTMASYSVSDAVATYYLYMTYVNPFIFSLATIIPMVPDEVLRKGSGTLCEMLLMVEAYKANVVCPNKNQADPEKFYQNQLLESETYIGGHVECLESGVFRSDIPTSFKLDSSAYQQLIDNLGRDLEYAITVEGKMRMDSISNYDEVKDEIKEKLEKLRDDPIREEGPLIYHLDVAAMYPNIILTNRLQPPSIVTDEICTACDFNRPGKTCLRKLEWVWRGVTFMGKKSDYYHLKKQIESEFVDAGANIMSSKSFLDLPKVDQQSKLKERLKKYCQKAYKRVLDKPITEVREAGICMRENPFYVDTVRSFRDRRYEYKTLNKVWKGKLSEAKASGNSIKIQEAQDMVVVYDSLQLAHKCILNSFYGYVMRKGARWYSMEMAGVVTYTGAKIIQNARLLIERIGKPLELDTDGIWCCLPGSFPENFTFKTIDMKKLTISYPCVMLNVDVAKNNTNDQYQTLVDPVRKTYKSHSECSIEFEVDGPYKAMIIPASKEEGILIKKRYAVFNHDGTLAELKGFEIKRRGELKLIKVFQAELFDKFLHGSTLEECYSAVAAVADRWLDLLDNQGKDIADSELLDYISESSTMSKSLADYGEQKSCAVTTAKRLAEFLGVTMVKDKGLRCQYIVACEPKGTPVSERAVPVAIFTTNPEVMKFHLRKWCKTSSDVGIRLIIDWSYYKQRLSSAIQKVITIPAAMQKVANPVPRVLHPDWLHKKVREKDDKFRQRKLVDMFSSANKDVVLDTDLPVTKDNVEDIEDFCKENRPSVKGPKPIARSYEVNKKQSECEQQESWDTEFHDISFQNIDKSVNYQGWLELKKRKWKVTLEKKKKRRLGDLRSSNQVDTHEINQKVGQGRGGVGSYFRRPEEALTSSHWQIIQLVPSPQSGQFFAWVVVEGLMLKIPLSIPRVFYINSKVPIDEYFQGKCVNKILPHGRPCYSLTEVKIQEDQFKKESKKRAALLADPGVEGIYETKVPLEFSAICQIGCVCKIDNKAKHRNTQDGWEVGELHMKTTTECHYLKRSIPLVYLYNSTSTGRAIYVLYCHVSKLMSAVVVDPFNGNELLPSALERQFRDSCLELSLDSLSWDGIRFQVHYVDHPEAAKKIIQRAISEYREENCGPTVAVIECPDFTFMKEGIKALDDFPCVRIPFNDDDNSYQPVSWQRPAAKIAMFRCAAAFQWLDRRITQSRYAHVPLGNFGLDWLTFTIDIFLSRALRDQQQVLWVSDNGVPDLGGINNEEAFFADEVQQTSLVFPGAYRKVSVELKIHNLAVNALLKSNLVNEMEGGGFMGFEQDVNPRGINSNDNTSFDETTGCAQAFRVLKQLIHSCLTDVRKSKNIYADSILQRLSWWLCSPSSKLHDPALHLMLHKVMQKVFALLLTDLRRLGAIIIYADFSKVIIDTVKFDLSAAKAYCESLLSTVRNSDIFEWILLEPVHYWHSLLFMDQYNYAGIRADDEISLDEVTIEPKWSVARHLPEYIERDFIIIIAKFIFDPWKFAIENKKGSSESLEAQMIEYLREQIGSTFINMLVKKVDDIMSHMKEINVSDASRVSGQAPKGDYSLEFIQVISAVLALDQNVQQDVLVMRKSLLKYIKVKECAAEAEFLDPGPSFILPNVACSNCDAYRDLDICRDPALLTEKEWSCADTQCGKIYDREQMESSLLEMVRQRERMYHMQDVVCIRCNQVKAAHLTEQCECSGSFRCKESGSEFSKRMEIFMDIAKRQKFRLLEEYISWIIYGPSY.

3 short sequence motifs (nuclear localization signal) span residues 5-12, 1137-1144, and 1239-1246; these read NRRRDRKD, HKKVREKD, and LKKRKWKV. C2038, C2041, C2063, and C2068 together coordinate Zn(2+). A CysA-type zinc finger spans residues 2038-2068; that stretch reads CSNCDAYRDLDICRDPALLTEKEWSCADTQC. C2099, C2102, C2114, and C2116 together coordinate [4Fe-4S] cluster. Residues 2099–2116 carry the CysB motif motif; sequence CIRCNQVKAAHLTEQCEC. Residues 2130–2137 carry the Nuclear localization signal 4 motif; the sequence is SKRMEIFM.

Belongs to the DNA polymerase type-B family. In terms of assembly, heterotetramer. Subunit of the DNA polymerase II. Interacts (via C-terminus) with DPB2. Interacts with LHP1/TFL2. [4Fe-4S] cluster serves as cofactor. As to expression, mostly expressed at low levels in inflorescence (floral meristem and flowers until anthesis), and, to a lower extent, in roots, seeds and leaves.

It localises to the nucleus. The enzyme catalyses DNA(n) + a 2'-deoxyribonucleoside 5'-triphosphate = DNA(n+1) + diphosphate. DNA polymerase II, which participates in chromosomal DNA replication. Required for the timing and determination of cell fate during plant embryogenesis and root pole development, by promoting cell cycle and cell type patterning. Necessary for proper shoot (SAM) and root apical meristem (RAM) functions. Involved in maintaining epigenetic states, controlling hypersensitive response (HR), and mediating abscisic acid (ABA) signaling. Required for flowering repression through a mechanism involving epigenetic gene silencing. May participate in processes involved in chromatin-mediated cellular memory. The protein is DNA polymerase epsilon catalytic subunit A (POL2A) of Arabidopsis thaliana (Mouse-ear cress).